Reading from the N-terminus, the 84-residue chain is NAD(P)H-quinone oxidoreductase subunit O (84 aa).

Belongs to the complex I NdhO subunit family. As to quaternary structure, NDH-1 can be composed of about 15 different subunits; different subcomplexes with different compositions have been identified which probably have different functions.

The protein resides in the cellular thylakoid membrane. It catalyses the reaction a plastoquinone + NADH + (n+1) H(+)(in) = a plastoquinol + NAD(+) + n H(+)(out). It carries out the reaction a plastoquinone + NADPH + (n+1) H(+)(in) = a plastoquinol + NADP(+) + n H(+)(out). Its function is as follows. NDH-1 shuttles electrons from an unknown electron donor, via FMN and iron-sulfur (Fe-S) centers, to quinones in the respiratory and/or the photosynthetic chain. The immediate electron acceptor for the enzyme in this species is believed to be plastoquinone. Couples the redox reaction to proton translocation, and thus conserves the redox energy in a proton gradient. Cyanobacterial NDH-1 also plays a role in inorganic carbon-concentration. In Synechococcus sp. (strain CC9605), this protein is NAD(P)H-quinone oxidoreductase subunit O.